A 368-amino-acid polypeptide reads, in one-letter code: Glutamate 5-kinase (368 aa).

Position 13 (Lys-13) interacts with ATP. Substrate contacts are provided by Ser-54, Asp-141, and Asn-153. 173–174 (SD) contributes to the ATP binding site. The PUA domain occupies 278-355 (RGEITVDAGA…AEIEAVLGYP (78 aa)).

This sequence belongs to the glutamate 5-kinase family.

It localises to the cytoplasm. The catalysed reaction is L-glutamate + ATP = L-glutamyl 5-phosphate + ADP. Its pathway is amino-acid biosynthesis; L-proline biosynthesis; L-glutamate 5-semialdehyde from L-glutamate: step 1/2. Functionally, catalyzes the transfer of a phosphate group to glutamate to form L-glutamate 5-phosphate. The sequence is that of Glutamate 5-kinase from Dinoroseobacter shibae (strain DSM 16493 / NCIMB 14021 / DFL 12).